The sequence spans 417 residues: UDP-N-acetylmuramoylalanine--D-glutamate ligase (417 aa).

108 to 114 is a binding site for ATP; the sequence is GSNGKTT.

Belongs to the MurCDEF family.

It is found in the cytoplasm. The catalysed reaction is UDP-N-acetyl-alpha-D-muramoyl-L-alanine + D-glutamate + ATP = UDP-N-acetyl-alpha-D-muramoyl-L-alanyl-D-glutamate + ADP + phosphate + H(+). It participates in cell wall biogenesis; peptidoglycan biosynthesis. In terms of biological role, cell wall formation. Catalyzes the addition of glutamate to the nucleotide precursor UDP-N-acetylmuramoyl-L-alanine (UMA). This chain is UDP-N-acetylmuramoylalanine--D-glutamate ligase, found in Chlamydia pneumoniae (Chlamydophila pneumoniae).